The following is a 419-amino-acid chain: Tyrosine--tRNA ligase (419 aa).

Tyr-42 contributes to the L-tyrosine binding site. The 'HIGH' region motif lies at 47-56; sequence ATAPSLHVGS. Residues Tyr-179 and Gln-183 each contribute to the L-tyrosine site. The 'KMSKS' region motif lies at 239–243; that stretch reads KMGKT. Lys-242 provides a ligand contact to ATP. In terms of domain architecture, S4 RNA-binding spans 353 to 418; it reads VVLAALFADA…GKKKIVLVKP (66 aa).

It belongs to the class-I aminoacyl-tRNA synthetase family. TyrS type 1 subfamily. In terms of assembly, homodimer.

It localises to the cytoplasm. It carries out the reaction tRNA(Tyr) + L-tyrosine + ATP = L-tyrosyl-tRNA(Tyr) + AMP + diphosphate + H(+). Catalyzes the attachment of tyrosine to tRNA(Tyr) in a two-step reaction: tyrosine is first activated by ATP to form Tyr-AMP and then transferred to the acceptor end of tRNA(Tyr). The polypeptide is Tyrosine--tRNA ligase (Caulobacter vibrioides (strain ATCC 19089 / CIP 103742 / CB 15) (Caulobacter crescentus)).